We begin with the raw amino-acid sequence, 319 residues long: MKPENKSPVLDLISAGMKTVVNTLQPDLPPWPATGTIAEQRQYYTLERRFWNAGAPEMATRAYMVPTKYGQVETRLFCPQPDSPATLFYLHGGGFILGNLDTHDRIMRLLASYSQCTVIGIDYTLSPEARFPQAIEEIVAACCYFHQQAEDYQINMSRIGFAGDSAGAMLALASALWLRDKQIDCGKIAGVLLWYGLYGLRDSVTRRLLGGVWDGLTQQDLQMYEEAYLSNDADRESPYYCLFNNDLTREVPPCFIAGAEFDPLLDDSRLLYQTLAAHQQPCEFKLYPGTLHAFLHYSRMMKTADEALRDGAQFFTAQL.

Residues 91–93 (HGG) carry the Involved in the stabilization of the negatively charged intermediate by the formation of the oxyanion hole motif. Residues Ser165, Asp262, and His292 contribute to the active site.

The protein belongs to the 'GDXG' lipolytic enzyme family. As to quaternary structure, homodimer. Interacts with MalT and MelA.

The protein resides in the cytoplasm. Its function is as follows. Displays esterase activity towards short chain fatty esters (acyl chain length of up to 8 carbons). Able to hydrolyze triacetylglycerol (triacetin) and tributyrylglycerol (tributyrin), but not trioleylglycerol (triolein) or cholesterol oleate. Negatively regulates MalT activity by antagonizing maltotriose binding. Inhibits MelA galactosidase activity. The sequence is that of Acetyl esterase from Escherichia coli O9:H4 (strain HS).